Consider the following 1843-residue polypeptide: Proteasome activator complex subunit 4 (1843 aa).

Over residues 1–11 (MEPAERAGVGE) the composition is skewed to low complexity. The disordered stretch occupies residues 1–25 (MEPAERAGVGEPPEPGGRPEPGPRG). Over residues 12-22 (PPEPGGRPEPG) the composition is skewed to pro residues. HEAT repeat units follow at residues 475-519 (PEGP…LVDC) and 998-1037 (NFCC…NHSG). Ser1121 bears the Phosphoserine mark. HEAT repeat units lie at residues 1179-1217 (RVLP…QLKR) and 1354-1392 (DAFL…GSKH). The residue at position 1614 (Ser1614) is a Phosphoserine. 2 HEAT repeats span residues 1636–1674 (PHQV…YNLF) and 1680–1718 (EDAV…CNFL). Residues 1650-1738 (ARSSSWHARY…EQLCKTKLPK (89 aa)) form a bromodomain-like (BRDL) region. Ser1746 bears the Phosphoserine mark.

Belongs to the BLM10 family. As to quaternary structure, homodimer. Interacts with the 20S and 26S proteasomes. Component of the spermatoproteasome, a form of the proteasome specifically found in testis.

It localises to the cytoplasm. The protein localises to the cytosol. It is found in the nucleus. The protein resides in the nucleus speckle. In terms of biological role, associated component of the proteasome that specifically recognizes acetylated histones and promotes ATP- and ubiquitin-independent degradation of core histones during spermatogenesis and DNA damage response. Recognizes and binds acetylated histones via its bromodomain-like (BRDL) region and activates the proteasome by opening the gated channel for substrate entry. Binds to the core proteasome via its C-terminus, which occupies the same binding sites as the proteasomal ATPases, opening the closed structure of the proteasome via an active gating mechanism. Component of the spermatoproteasome, a form of the proteasome specifically found in testis: binds to acetylated histones and promotes degradation of histones, thereby participating actively to the exchange of histones during spermatogenesis. Also involved in DNA damage response in somatic cells, by promoting degradation of histones following DNA double-strand breaks. This chain is Proteasome activator complex subunit 4, found in Homo sapiens (Human).